We begin with the raw amino-acid sequence, 124 residues long: Astakine (124 aa).

Positions 1–21 are cleaved as a signal peptide; sequence MAVSSAVRMLSVACLVVSAAG. Cystine bridges form between cysteine 28/cysteine 40, cysteine 34/cysteine 52, cysteine 39/cysteine 91, cysteine 62/cysteine 99, and cysteine 93/cysteine 106.

Belongs to the AVIT (prokineticin) family.

The protein resides in the secreted. Functionally, cytokine directly involved in hematopoiesis. The protein is Astakine of Penaeus monodon (Giant tiger prawn).